We begin with the raw amino-acid sequence, 104 residues long: Succinate dehydrogenase assembly factor 4, mitochondrial (104 aa).

The transit peptide at 1 to 30 (MVSTTLSVSRMTFVWRAARPSLLNHSLRKM) directs the protein to the mitochondrion. The disordered stretch occupies residues 29-104 (KMSYQEGKPE…WERKGRCIDF (76 aa)). 2 stretches are compositionally biased toward basic and acidic residues: residues 63-83 (EREP…EKGG) and 91-104 (RYGD…CIDF).

Belongs to the SDHAF4 family. Interacts with Sdha in its FAD-bound form.

The protein resides in the mitochondrion matrix. Its function is as follows. Plays an essential role in the assembly of succinate dehydrogenase (SDH), an enzyme complex (also referred to as respiratory complex II) that is a component of both the tricarboxylic acid (TCA) cycle and the mitochondrial electron transport chain, and which couples the oxidation of succinate to fumarate with the reduction of ubiquinone (coenzyme Q) to ubiquinol. Binds to the flavoprotein subunit Sdha in its FAD-bound form, blocking the generation of excess reactive oxygen species (ROS) and facilitating its assembly with the iron-sulfur protein subunit Sdhb into the SDH catalytic dimer. This is Succinate dehydrogenase assembly factor 4, mitochondrial from Mus musculus (Mouse).